A 363-amino-acid polypeptide reads, in one-letter code: MFTRTIRQQIRRSSALSLVRNNWTREEIQKIYDTPLIDLIFRAASIHRKFHDPKKVQQCTLLSIKTGGCTEDCKYCAQSSRYNTGVKATKLMKIDEVLEKAKIAKAKGSTRFCMGSAWRDLNGRNRTFKNILEIIKEVRSMDMEVCVTLGMLNEQQAKELKDAGLTAYNHNLDTSREYYSKIISTRTYDERLNTIDNLRKAGLKVCSGGILGLGEKKHDRVGLIHSLATMPTHPESVPFNLLVPIPGTPVGDAVKERLPIHPFLRSIATARICMPKTIIRFAAGRNTCSESEQALAFMAGANAVFTGEKMLTTPAVSWDSDSQLFYNWGLEGMQSFEYGTSTEGEDGTFTLPPKERLAPSPSL.

Phosphoserine occurs at positions 13, 14, and 17. A Radical SAM core domain is found at K54–K276. [4Fe-4S] cluster contacts are provided by C69, C73, and C76. C113, C146, C206, and R280 together coordinate [2Fe-2S] cluster. Residues E337–L363 are disordered.

Belongs to the radical SAM superfamily. Biotin synthase family. It depends on [4Fe-4S] cluster as a cofactor. Requires [2Fe-2S] cluster as cofactor.

It carries out the reaction (4R,5S)-dethiobiotin + (sulfur carrier)-SH + 2 reduced [2Fe-2S]-[ferredoxin] + 2 S-adenosyl-L-methionine = (sulfur carrier)-H + biotin + 2 5'-deoxyadenosine + 2 L-methionine + 2 oxidized [2Fe-2S]-[ferredoxin]. Its pathway is cofactor biosynthesis; biotin biosynthesis; biotin from 7,8-diaminononanoate: step 2/2. In terms of biological role, catalyzes the last step of biotin biosynthesis, the conversion of dethiobiotin to biotin. In Schizosaccharomyces pombe (strain 972 / ATCC 24843) (Fission yeast), this protein is Biotin synthase (bio2).